The sequence spans 197 residues: ATP-dependent Clp protease proteolytic subunit (197 aa).

S100 serves as the catalytic Nucleophile. H125 is a catalytic residue.

It belongs to the peptidase S14 family. As to quaternary structure, component of the chloroplastic Clp protease core complex.

Its subcellular location is the plastid. It localises to the chloroplast stroma. The catalysed reaction is Hydrolysis of proteins to small peptides in the presence of ATP and magnesium. alpha-casein is the usual test substrate. In the absence of ATP, only oligopeptides shorter than five residues are hydrolyzed (such as succinyl-Leu-Tyr-|-NHMec, and Leu-Tyr-Leu-|-Tyr-Trp, in which cleavage of the -Tyr-|-Leu- and -Tyr-|-Trp bonds also occurs).. Functionally, cleaves peptides in various proteins in a process that requires ATP hydrolysis. Has a chymotrypsin-like activity. Plays a major role in the degradation of misfolded proteins. This Angiopteris evecta (Mule's foot fern) protein is ATP-dependent Clp protease proteolytic subunit.